The sequence spans 369 residues: Superinfection exclusion protein (369 aa).

A signal peptide spans 1 to 15 (MIALLILSLTCSVST).

The protein belongs to the serpin family. Orthopoxvirus OPG040 subfamily. As to quaternary structure, interacts with OPG185/A56 protein.

The protein localises to the virion membrane. The protein resides in the host cell membrane. Its function is as follows. Negatively regulates superinfection and syncytium formation in infected host cells. Acts in concert with OPG185/A56 protein at the host cell membrane by interacting with and inhibiting the mature virion entry/fusion complex (EFC). This mechanism ensures that new virions released from the cell cannot enter already infected cells. The sequence is that of Superinfection exclusion protein (OPG040) from Vaccinia virus (strain Western Reserve) (VACV).